Reading from the N-terminus, the 387-residue chain is MNIKLPTFIELYRQLIATPSISATDAKTDQSNEALINLLANWLETLGFSIEIQPVPETRGKFNLLATLGSGTGGLLLCGHTDTVPFDEGRWTQDPFTLTEKEGKLYGLGTADMKGFFAFIIDALRDIDTSQLTHPLYILATADEETSMAGARYFAANTAIRPDFAIIGEPTSLQPIRAHKGHLSNAIRITGQSGHSSDPEKGVNAIELMHESITHLSTLRDRLKTRYNNPAFVIPYPTMNFGYINGGDAANRICACCELHMDIRPLPGLTLQDLDDLLHETLAPVKARWPGRLSVEALHEPIPGYECPTDHKMVAVIEKLLGEKAQTVNYCTEAPFIQALCPTLVLGPGSIEQAHQPDEFIDMAFIEPTRELMGQLIENFCLAEKAK.

Histidine 80 lines the Zn(2+) pocket. The active site involves aspartate 82. Aspartate 112 provides a ligand contact to Zn(2+). Glutamate 144 is a catalytic residue. Residues glutamate 145, glutamate 169, and histidine 355 each coordinate Zn(2+).

The protein belongs to the peptidase M20A family. ArgE subfamily. As to quaternary structure, homodimer. It depends on Zn(2+) as a cofactor. Co(2+) serves as cofactor. Requires glutathione as cofactor.

The protein resides in the cytoplasm. The catalysed reaction is N(2)-acetyl-L-ornithine + H2O = L-ornithine + acetate. Its pathway is amino-acid biosynthesis; L-arginine biosynthesis; L-ornithine from N(2)-acetyl-L-ornithine (linear): step 1/1. Its function is as follows. Catalyzes the hydrolysis of the amide bond of N(2)-acetylated L-amino acids. Cleaves the acetyl group from N-acetyl-L-ornithine to form L-ornithine, an intermediate in L-arginine biosynthesis pathway, and a branchpoint in the synthesis of polyamines. The protein is Acetylornithine deacetylase of Proteus mirabilis (strain HI4320).